The following is a 201-amino-acid chain: Thymidine kinase (201 aa).

ATP-binding positions include 9–16 (SAMNAGKS) and 87–90 (DECH). Glu-88 serves as the catalytic Proton acceptor. The Zn(2+) site is built by Cys-145, Cys-147, Cys-182, and His-185.

Belongs to the thymidine kinase family. As to quaternary structure, homotetramer.

Its subcellular location is the cytoplasm. The catalysed reaction is thymidine + ATP = dTMP + ADP + H(+). The protein is Thymidine kinase of Photorhabdus laumondii subsp. laumondii (strain DSM 15139 / CIP 105565 / TT01) (Photorhabdus luminescens subsp. laumondii).